Consider the following 472-residue polypeptide: Siroheme synthase 1 (472 aa).

The interval 1–203 (MDYLPLFADL…GQLTEAENEL (203 aa)) is precorrin-2 dehydrogenase /sirohydrochlorin ferrochelatase. Residues 22-23 (EV) and 43-44 (QT) contribute to the NAD(+) site. Ser-128 is modified (phosphoserine). The interval 215–472 (GEVALVGAGP…AISPSVVNLA (258 aa)) is uroporphyrinogen-III C-methyltransferase. Pro-224 serves as a coordination point for S-adenosyl-L-methionine. The Proton acceptor role is filled by Asp-247. Residue Lys-269 is the Proton donor of the active site. Residues 300–302 (GGD), Ile-305, 330–331 (TA), Met-382, and Gly-411 each bind S-adenosyl-L-methionine.

It in the N-terminal section; belongs to the precorrin-2 dehydrogenase / sirohydrochlorin ferrochelatase family. The protein in the C-terminal section; belongs to the precorrin methyltransferase family.

The catalysed reaction is uroporphyrinogen III + 2 S-adenosyl-L-methionine = precorrin-2 + 2 S-adenosyl-L-homocysteine + H(+). It catalyses the reaction precorrin-2 + NAD(+) = sirohydrochlorin + NADH + 2 H(+). The enzyme catalyses siroheme + 2 H(+) = sirohydrochlorin + Fe(2+). Its pathway is cofactor biosynthesis; adenosylcobalamin biosynthesis; precorrin-2 from uroporphyrinogen III: step 1/1. It participates in cofactor biosynthesis; adenosylcobalamin biosynthesis; sirohydrochlorin from precorrin-2: step 1/1. The protein operates within porphyrin-containing compound metabolism; siroheme biosynthesis; precorrin-2 from uroporphyrinogen III: step 1/1. It functions in the pathway porphyrin-containing compound metabolism; siroheme biosynthesis; siroheme from sirohydrochlorin: step 1/1. Its pathway is porphyrin-containing compound metabolism; siroheme biosynthesis; sirohydrochlorin from precorrin-2: step 1/1. In terms of biological role, multifunctional enzyme that catalyzes the SAM-dependent methylations of uroporphyrinogen III at position C-2 and C-7 to form precorrin-2 via precorrin-1. Then it catalyzes the NAD-dependent ring dehydrogenation of precorrin-2 to yield sirohydrochlorin. Finally, it catalyzes the ferrochelation of sirohydrochlorin to yield siroheme. The protein is Siroheme synthase 1 of Yersinia pestis bv. Antiqua (strain Nepal516).